The primary structure comprises 707 residues: Polyribonucleotide nucleotidyltransferase (707 aa).

Positions 488 and 494 each coordinate Mg(2+). The region spanning 555 to 615 (PIIKVTKIDP…ENVDNAIALI (61 aa)) is the KH domain. The S1 motif domain occupies 625 to 692 (GEILEGKITR…DLGRLQFKRV (68 aa)).

It belongs to the polyribonucleotide nucleotidyltransferase family. It depends on Mg(2+) as a cofactor.

It localises to the cytoplasm. The enzyme catalyses RNA(n+1) + phosphate = RNA(n) + a ribonucleoside 5'-diphosphate. Its function is as follows. Involved in mRNA degradation. Catalyzes the phosphorolysis of single-stranded polyribonucleotides processively in the 3'- to 5'-direction. The polypeptide is Polyribonucleotide nucleotidyltransferase (Thermotoga neapolitana (strain ATCC 49049 / DSM 4359 / NBRC 107923 / NS-E)).